Reading from the N-terminus, the 310-residue chain is MSKIIFMGTPDFSTKVLEMLIAEHEVIAVVTQPDRPVGRKKVMTPPPVKRVATKHQIPVYQPEKLKDSQELDVLLSLESDLIVTAAFGQLLPESLLNAPKLGAINVHASLLPKYRGGAPIHQAIIDGEEETGITIMYMVKKLDAGNIISQQSIRIEEEDNVGTMHDKLSFLGAELLKKTLPSIIDNTNDSIPQDDALATFASNIRREDERIDWNMSAQAIHNHIRGLSPWPVAYTTMNEKNLKLFSAFIVKGKKGNPGTIIEATKHELIIATGSDDAIALTEIQPAGKKRMKVTDYLSGVQESLVGKVLL.

(6S)-5,6,7,8-tetrahydrofolate is bound at residue 109–112 (SLLP).

It belongs to the Fmt family.

The catalysed reaction is L-methionyl-tRNA(fMet) + (6R)-10-formyltetrahydrofolate = N-formyl-L-methionyl-tRNA(fMet) + (6S)-5,6,7,8-tetrahydrofolate + H(+). Functionally, attaches a formyl group to the free amino group of methionyl-tRNA(fMet). The formyl group appears to play a dual role in the initiator identity of N-formylmethionyl-tRNA by promoting its recognition by IF2 and preventing the misappropriation of this tRNA by the elongation apparatus. The protein is Methionyl-tRNA formyltransferase of Staphylococcus epidermidis (strain ATCC 35984 / DSM 28319 / BCRC 17069 / CCUG 31568 / BM 3577 / RP62A).